A 155-amino-acid polypeptide reads, in one-letter code: MPHPLLPDITPVAASTAAAHGFELVEIQILTHLQPMTVQVQIRRTDGSDVSLDDCAGFSGPMGEALESQALLTEAYVLEISSPGIGEQLQSDRDFQTFRSYPVEVLYRDDEGREQRQQGSLLERNADHVQVNVRGRIKRIARASVISVQLISPTG.

It belongs to the RimP family.

The protein localises to the cytoplasm. Required for maturation of 30S ribosomal subunits. The chain is Ribosome maturation factor RimP from Synechococcus sp. (strain WH7803).